We begin with the raw amino-acid sequence, 128 residues long: MTGYTPDEKLRLQQLRELRRRWLKDQELSPREPVLPPQKMGPMEKFWNKFLENKSPWRKMVHGVYKKSIFVFTHVLVPVWIIHYYMKYHVSEKPYGIVEKKSRIFPGDTILETGEVIPPMKEFPDQHH.

T2 carries the post-translational modification N-acetylthreonine. N6-acetyllysine is present on K24. A helical transmembrane segment spans residues 68–86; that stretch reads SIFVFTHVLVPVWIIHYYM.

The protein belongs to the complex I NDUFB6 subunit family. As to quaternary structure, complex I is composed of 45 different subunits.

It is found in the mitochondrion inner membrane. Functionally, accessory subunit of the mitochondrial membrane respiratory chain NADH dehydrogenase (Complex I), that is believed not to be involved in catalysis. Complex I functions in the transfer of electrons from NADH to the respiratory chain. The immediate electron acceptor for the enzyme is believed to be ubiquinone. The polypeptide is NADH dehydrogenase [ubiquinone] 1 beta subcomplex subunit 6 (NDUFB6) (Pan troglodytes (Chimpanzee)).